The sequence spans 447 residues: Na(+)-translocating NADH-quinone reductase subunit A (447 aa).

Belongs to the NqrA family. Composed of six subunits; NqrA, NqrB, NqrC, NqrD, NqrE and NqrF.

The enzyme catalyses a ubiquinone + n Na(+)(in) + NADH + H(+) = a ubiquinol + n Na(+)(out) + NAD(+). Its function is as follows. NQR complex catalyzes the reduction of ubiquinone-1 to ubiquinol by two successive reactions, coupled with the transport of Na(+) ions from the cytoplasm to the periplasm. NqrA to NqrE are probably involved in the second step, the conversion of ubisemiquinone to ubiquinol. The sequence is that of Na(+)-translocating NADH-quinone reductase subunit A from Klebsiella pneumoniae subsp. pneumoniae (strain ATCC 700721 / MGH 78578).